The sequence spans 479 residues: Glycogen synthase (479 aa).

An ADP-alpha-D-glucose-binding site is contributed by Lys15.

Belongs to the glycosyltransferase 1 family. Bacterial/plant glycogen synthase subfamily.

The enzyme catalyses [(1-&gt;4)-alpha-D-glucosyl](n) + ADP-alpha-D-glucose = [(1-&gt;4)-alpha-D-glucosyl](n+1) + ADP + H(+). It functions in the pathway glycan biosynthesis; glycogen biosynthesis. In terms of biological role, synthesizes alpha-1,4-glucan chains using ADP-glucose. The polypeptide is Glycogen synthase (Clostridium beijerinckii (strain ATCC 51743 / NCIMB 8052) (Clostridium acetobutylicum)).